A 215-amino-acid polypeptide reads, in one-letter code: Small ribosomal subunit protein eS1 (215 aa).

Belongs to the eukaryotic ribosomal protein eS1 family.

The sequence is that of Small ribosomal subunit protein eS1 from Halorubrum lacusprofundi (strain ATCC 49239 / DSM 5036 / JCM 8891 / ACAM 34).